We begin with the raw amino-acid sequence, 285 residues long: Steroidogenic acute regulatory protein, mitochondrial (285 aa).

The transit peptide at 1–61 directs the protein to the mitochondrion; sequence MLPATFKLCA…RRSSLLSSPI (61 aa). The region spanning 65 to 278 is the START domain; sequence TYSEADQCYV…LRDRMASGGG (214 aa).

May interact with TSPO. As to expression, highly expressed in the testis and at lower levels in the ovary, kidney and head.

The protein resides in the mitochondrion. The enzyme catalyses cholesterol(in) = cholesterol(out). It functions in the pathway steroid metabolism; cholesterol metabolism. Plays a key role in steroid hormone synthesis by enhancing the metabolism of cholesterol into pregnenolone. Mediates the transfer of cholesterol from the outer mitochondrial membrane to the inner mitochondrial membrane where it is cleaved to pregnenolone. This is Steroidogenic acute regulatory protein, mitochondrial (star) from Danio rerio (Zebrafish).